We begin with the raw amino-acid sequence, 415 residues long: Small ribosomal subunit protein uS5m (415 aa).

The tract at residues 1 to 31 (MRRSGPELWKTLTSVSKSGQKKGRRNTRQPV) is disordered. The S5 DRBM domain occupies 131-197 (FETYCLEVKR…GMASRKIFHV (67 aa)). Residues 396–415 (GVEPMPLGIGLSHVVPKKDD) are disordered.

Belongs to the universal ribosomal protein uS5 family. Component of the mitochondrial ribosome small subunit (28S) which comprises a 12S rRNA and about 30 distinct proteins.

It localises to the mitochondrion. The sequence is that of Small ribosomal subunit protein uS5m (mrps-5) from Caenorhabditis briggsae.